A 519-amino-acid chain; its full sequence is Trichothecene 15-O-acetyltransferase TRI3 (519 aa).

His-414 lines the 15-deacetylcalonectrin pocket.

The protein belongs to the trichothecene O-acetyltransferase family.

Its pathway is sesquiterpene biosynthesis; trichothecene biosynthesis. In terms of biological role, 15-O-acetyltransferase; part of the core gene cluster that mediates the biosynthesis of trichothecenes, a very large family of chemically related bicyclic sesquiterpene compounds acting as mycotoxins, including T2-toxin. The biosynthesis of trichothecenes begins with the cyclization of farnesyl diphosphate to trichodiene and is catalyzed by the trichodiene synthase TRI5. Trichodiene undergoes a series of oxygenations catalyzed by the cytochrome P450 monooxygenase TRI4. TRI4 controls the addition of four oxygens at C-2, C-3, C-11, and the C-12, C-13-epoxide to form the intermediate isotrichotriol. Isotrichotriol then undergoes a non-enzymatic isomerization and cyclization to form isotrichodermol. During this process, the oxygen at the C-2 position becomes the pyran ring oxygen and the hydroxyl group at C-11 is lost. More complex type A trichothecenes are built by modifying isotrichodermol through a series of paired hydroxylation and acetylation or acylation steps. Isotrichodermol is converted to isotrichodermin by the acetyltransferase TRI101. TRI101 encodes a C-3 transacetylase that acts as a self-protection or resistance factor during biosynthesis and that the presence of a free C-3 hydroxyl group is a key component of Fusarium trichothecene phytotoxicity. A second hydroxyl group is added to C-15 by the trichothecene C-15 hydroxylase TRI11, producing 15-decalonectrin, which is then acetylated by TRI3, producing calonectrin. A third hydroxyl group is added at C-4 by the cytochrome P450 monooxygenase TRI13, converting calonectrin to 3,15-diacetoxyspirpenol, which is subsequently acetylated by the acetyltransferase TRI7. A fourth hydroxyl group is added to C-8 by the cytochrome P450 monooxygenase TRI1, followed by the addition of an isovaleryl moiety by TRI16. Finally, the acetyl group is removed from the C-3 position by the trichothecene C-3 esterase TRI8 to produce T-2 toxin. The protein is Trichothecene 15-O-acetyltransferase TRI3 of Fusarium sporotrichioides.